Consider the following 141-residue polypeptide: Acetyltransferase YpeA (141 aa).

Residues 1-141 (MEIRVFRQED…GKRLIEDEEY (141 aa)) form the N-acetyltransferase domain.

This sequence belongs to the acetyltransferase family. YpeA subfamily.

The protein is Acetyltransferase YpeA of Salmonella choleraesuis (strain SC-B67).